The chain runs to 1174 residues: Pesticidal crystal protein Cry1Fa (1174 aa).

This sequence belongs to the delta endotoxin family.

Its function is as follows. Promotes colloidosmotic lysis by binding to the midgut epithelial cells of many lepidopteran larvae. This is Pesticidal crystal protein Cry1Fa (cry1Fa) from Bacillus thuringiensis subsp. aizawai.